The following is a 437-amino-acid chain: La-related protein 7 homolog (437 aa).

The HTH La-type RNA-binding domain maps to 38 to 145 (SKSPSLTIPK…KRKKKFDNRT (108 aa)). The region spanning 279–397 (ELSQSCFLKI…QRSSIDEIKA (119 aa)) is the xRRM domain. Basic residues predominate over residues 417 to 427 (RRPVSKRKNKA). The segment at 417–437 (RRPVSKRKNKAINKMSTEVKK) is disordered.

The protein belongs to the LARP7 family. In terms of assembly, component of the telomerase holoenzyme complex composed minimally of the catalytic subunit p123 and the telomerase RNA template component. In terms of processing, the mature form of the protein is a protein of 43 kDa, which is derived from a 51 kDa precursor by proteolytic cleavage.

It is found in the nucleus. It localises to the chromosome. The protein localises to the telomere. Functionally, RNA-binding protein required for assembly of the holoenzyme telomerase ribonucleoprotein (RNP) complex. Specifically binds telomerase RNA and promotes its assembly with catalytic subunit p123, thereby stimulating enzymatic activity and processivity of p123. Telomerase is a ribonucleoprotein enzyme essential that copies new telomeric repeats onto chromosome ends and functions to maintain cell division. This is La-related protein 7 homolog from Euplotes aediculatus (Ciliate).